The following is a 31-amino-acid chain: Cyclotide cter-R (31 aa).

Positions Gly1–Asn31 form a cross-link, cyclopeptide (Gly-Asn). 3 cysteine pairs are disulfide-bonded: Cys4-Cys21, Cys8-Cys23, and Cys13-Cys28.

Post-translationally, this is a cyclic peptide.

It localises to the secreted. In terms of biological role, probably participates in a plant defense mechanism. The chain is Cyclotide cter-R from Clitoria ternatea (Butterfly pea).